The chain runs to 221 residues: Thiol:disulfide interchange protein TlpA (221 aa).

At 1–11 (MLDTKPSATRR) the chain is on the cytoplasmic side. Residues 12–35 (IPLVIATVAVGGLAGFAALYGLGL) traverse the membrane as a helical segment. The Periplasmic portion of the chain corresponds to 36-221 (SRAPTGDPAC…AATGKAAAAL (186 aa)). Intrachain disulfides connect cysteine 45–cysteine 190 and cysteine 107–cysteine 110. The Thioredoxin domain maps to 69 to 215 (ASAPLKLPDL…ALKLIRAATG (147 aa)).

Belongs to the thioredoxin family. In terms of assembly, monomer.

The protein localises to the cell membrane. Functionally, involved in cytochrome aa3 assembly. The polypeptide is Thiol:disulfide interchange protein TlpA (tlpA) (Bradyrhizobium diazoefficiens (strain JCM 10833 / BCRC 13528 / IAM 13628 / NBRC 14792 / USDA 110)).